Reading from the N-terminus, the 563-residue chain is Group II intron-interrupted relaxase LtrB (563 aa).

The active site involves tyrosine 44. Mg(2+)-binding residues include histidine 159 and histidine 161.

Belongs to the mobilization (MOB) protein type 1 family. The cofactor is Mg(2+). Requires Mn(2+) as cofactor.

Functionally, mediates initiation of conjugal transfer possibly by introducing a single-stranded nick at the potential origin of transfer. The sequence is that of Group II intron-interrupted relaxase LtrB (ltrBE1) from Lactococcus lactis subsp. cremoris (strain MG1363).